A 641-amino-acid polypeptide reads, in one-letter code: MSTGAQTKAAEASQHADGPRLLADVGGTNARFALETGPGEITQIRVYPGAEYPTLTDAIRRYLKDVKIGRVNHAAIAIANPVDGDQVRMTNHNWSFSIEATRRALGFDTLLVVNDFTALAMALPGLTDAQRVQIGAGARRQNSVIGLMGPGTGLGVSGLIPADDRWIALGSEGGHATFAPMDEREDLVLQYARRKYPHVSFERVCAGPGMEIIYRALAARDKKRIAANVVTADIVERAHAGDALALEAVECFCGILGTFAGNLAVTLGALGGIYIGGGVVPKLGELFMRSPFRARFEAKGRFEAYLANIPTYLITAEYPAFLGVSAILAEQLSNRTGGASSAVFERIRQMRDALTPAERRVADLALNHPRSIINDPIVDIARKADVSQPTVIRFCRSLGCQGLSDFKLKLATGLTGTIPMSHSQVHLGDTATDFGAKVLDNTVSAILQLREHLNFEHVEQAIDILNNARRIEFYGLGNSNIVAQDAHYKFFRFGIPTIAYGDLYMQAASAALLGKGDVIVAVSKSGRAPELLRVLDVAMQAGAKVIAITSSNTPLAKRATVALETDHIEMRESQLSMISRILHLVMIDILAVGVAIRRASPNAELAEAMARAKARAGASAGDEAADVLDWLSHGAAPAAKE.

The segment at 1 to 21 (MSTGAQTKAAEASQHADGPRL) is disordered. Residues 1 to 340 (MSTGAQTKAA…QLSNRTGGAS (340 aa)) form a glucokinase region. 23–28 (ADVGGT) serves as a coordination point for ATP. Residues 341 to 417 (SAVFERIRQM…LKLATGLTGT (77 aa)) form the HTH rpiR-type domain. The interval 341-641 (SAVFERIRQM…SHGAAPAAKE (301 aa)) is putative HTH-type transcriptional regulator. The H-T-H motif DNA-binding region spans 377–396 (IVDIARKADVSQPTVIRFCR). One can recognise an SIS domain in the interval 461–600 (AIDILNNARR…AVGVAIRRAS (140 aa)). A helical membrane pass occupies residues 576 to 596 (SMISRILHLVMIDILAVGVAI).

It in the N-terminal section; belongs to the bacterial glucokinase family.

It localises to the membrane. It carries out the reaction D-glucose + ATP = D-glucose 6-phosphate + ADP + H(+). The sequence is that of Bifunctional protein glk (glk) from Burkholderia thailandensis (strain ATCC 700388 / DSM 13276 / CCUG 48851 / CIP 106301 / E264).